The primary structure comprises 198 residues: tRNA(Phe) 7-((3-amino-3-carboxypropyl)-4-demethylwyosine(37)-N(4))-methyltransferase 1 (198 aa).

It belongs to the TYW3 family.

It catalyses the reaction 4-demethyl-7-[(3S)-3-amino-3-carboxypropyl]wyosine(37) in tRNA(Phe) + S-adenosyl-L-methionine = 7-[(3S)-3-amino-3-carboxypropyl]wyosine(37) in tRNA(Phe) + S-adenosyl-L-homocysteine + H(+). In terms of biological role, S-adenosyl-L-methionine-dependent methyltransferase that acts as a component of the wyosine derivatives biosynthesis pathway. Probably methylates N-4 position of wybutosine-86 to produce wybutosine-72. The protein is tRNA(Phe) 7-((3-amino-3-carboxypropyl)-4-demethylwyosine(37)-N(4))-methyltransferase 1 of Thermococcus kodakarensis (strain ATCC BAA-918 / JCM 12380 / KOD1) (Pyrococcus kodakaraensis (strain KOD1)).